Reading from the N-terminus, the 412-residue chain is UDP-galactose transporter homolog 1 (412 aa).

Residues 3–23 (VLRLAVCISGVYAAFLLWAIA) form a helical membrane-spanning segment. The tract at residues 31 to 51 (FPSVHPHPHQQPHSPSDPPPG) is disordered. The next 4 membrane-spanning stretches (helical) occupy residues 58–78 (LFLN…YLSF), 139–159 (LLAL…IGFL), 197–217 (YIVV…AETS), and 222–242 (GGSD…IDGL). A glycan (N-linked (GlcNAc...) asparagine) is linked at Asn244. 4 consecutive transmembrane segments (helical) span residues 262 to 282 (MMFT…VLPL), 325 to 345 (SALA…LFIF), 355 to 375 (TLVM…VVVF), and 379 to 399 (LTKG…VEAG).

The protein belongs to the nucleotide-sugar transporter family. SLC35B subfamily.

Its subcellular location is the endoplasmic reticulum membrane. May be involved in specific transport of UDP-Gal from the cytosol to the Golgi lumen. Involved in the maintenance of optimal conditions for the folding of secretory pathway proteins in the endoplasmic reticulum. The polypeptide is UDP-galactose transporter homolog 1 (HUT1-A) (Cryptococcus neoformans var. neoformans serotype D (strain JEC21 / ATCC MYA-565) (Filobasidiella neoformans)).